We begin with the raw amino-acid sequence, 379 residues long: tRNA-specific 2-thiouridylase MnmA (379 aa).

ATP contacts are provided by residues 9 to 16 and methionine 35; that span reads GLSGGVDS. An interaction with target base in tRNA region spans residues 95–97; sequence NPD. Cysteine 100 (nucleophile) is an active-site residue. Cysteine 100 and cysteine 198 are joined by a disulfide. An ATP-binding site is contributed by glycine 124. Positions 148–150 are interaction with tRNA; the sequence is KDQ. Cysteine 198 serves as the catalytic Cysteine persulfide intermediate. An interaction with tRNA region spans residues 325–326; that stretch reads RY.

Belongs to the MnmA/TRMU family.

Its subcellular location is the cytoplasm. The catalysed reaction is S-sulfanyl-L-cysteinyl-[protein] + uridine(34) in tRNA + AH2 + ATP = 2-thiouridine(34) in tRNA + L-cysteinyl-[protein] + A + AMP + diphosphate + H(+). Catalyzes the 2-thiolation of uridine at the wobble position (U34) of tRNA, leading to the formation of s(2)U34. The polypeptide is tRNA-specific 2-thiouridylase MnmA (Acidovorax sp. (strain JS42)).